A 404-amino-acid polypeptide reads, in one-letter code: Glucoside xylosyltransferase 1 (404 aa).

The Cytoplasmic portion of the chain corresponds to 1-6; it reads MRRYLR. Residues 7 to 29 form a helical; Signal-anchor for type II membrane protein membrane-spanning segment; sequence VVGLCLACGFCSLLYAFSQLAVS. At 30-404 the chain is on the lumenal side; the sequence is LEEGAAGGRR…NRYDTPPKER (375 aa). Asn-201 carries N-linked (GlcNAc...) asparagine glycosylation.

Belongs to the glycosyltransferase 8 family.

The protein localises to the membrane. The catalysed reaction is 3-O-(beta-D-glucosyl)-L-seryl-[EGF-like domain protein] + UDP-alpha-D-xylose = 3-O-[alpha-D-xylosyl-(1-&gt;3)-beta-D-glucosyl]-L-seryl-[EGF-like domain protein] + UDP + H(+). Glycosyltransferase which elongates the O-linked glucose attached to EGF-like repeats in the extracellular domain of Notch proteins by catalyzing the addition of xylose. In Mus musculus (Mouse), this protein is Glucoside xylosyltransferase 1 (Gxylt1).